The chain runs to 449 residues: Heterogeneous nuclear ribonucleoprotein H (449 aa).

Position 1 is an N-acetylmethionine; in Heterogeneous nuclear ribonucleoprotein H; alternate (Met-1). Met-2 carries the N-acetylmethionine; in Heterogeneous nuclear ribonucleoprotein H, N-terminally processed modification. In terms of domain architecture, RRM 1 spans 11-90 (FVVKVRGLPW…RYVEVFKSNN (80 aa)). Phosphoserine is present on Ser-23. Lys-35 is covalently cross-linked (Glycyl lysine isopeptide (Lys-Gly) (interchain with G-Cter in SUMO2)). 2 positions are modified to phosphoserine: Ser-54 and Ser-63. Glycyl lysine isopeptide (Lys-Gly) (interchain with G-Cter in SUMO2) cross-links involve residues Lys-87 and Lys-98. An RRM 2 domain is found at 111–188 (GFVRLRGLPF…RYIEIFKSSR (78 aa)). Arg-233 is modified (dimethylated arginine; alternate). Arg-233 carries the omega-N-methylarginine; alternate modification. Residues 234–249 (GAYGGGYGGYDDYNGY) form a 1-1 repeat. The 2 X 16 AA Gly-rich approximate repeats stretch occupies residues 234 to 433 (GAYGGGYGGY…YGGQSSMSGY (200 aa)). Tyr-246 bears the Phosphotyrosine mark. The 76-residue stretch at 289 to 364 (HCVHMRGLPY…RYVELFLNST (76 aa)) folds into the RRM 3 domain. At Ser-310 the chain carries Phosphoserine. 3 consecutive repeat copies span residues 354 to 372 (HRYV…GGAY), 374 to 392 (HRYV…GGAY), and 418 to 433 (GGYG…MSGY). The interval 354–392 (HRYVELFLNSTAGASGGAYEHRYVELFLNSTAGASGGAY) is 2 X 19 AA perfect repeats.

Part of a ternary complex containing FUBP2, PTBP1, PTBP2 and HNRNPH1. Identified in the spliceosome C complex. Interacts with IGF2BP1. Interacts with CUGBP1; the interaction is RNA-dependent. Interacts with MBNL1; the interaction in RNA-independent. As to expression, expressed ubiquitously.

Its subcellular location is the nucleus. The protein localises to the nucleoplasm. This protein is a component of the heterogeneous nuclear ribonucleoprotein (hnRNP) complexes which provide the substrate for the processing events that pre-mRNAs undergo before becoming functional, translatable mRNAs in the cytoplasm. Mediates pre-mRNA alternative splicing regulation. Inhibits, together with CUGBP1, insulin receptor (IR) pre-mRNA exon 11 inclusion in myoblast. Binds to the IR RNA. Binds poly(RG). This is Heterogeneous nuclear ribonucleoprotein H (HNRNPH1) from Homo sapiens (Human).